The following is a 1324-amino-acid chain: Ubiquitin carboxyl-terminal hydrolase 42 (1324 aa).

2 disordered regions span residues M1–W38 and Y63–A87. A compositionally biased stretch (polar residues) spans S10–A25. The segment covering Y63–Q80 has biased composition (low complexity). The residue at position 75 (S75) is a Phosphoserine. The USP domain maps to A111 to S412. The active-site Nucleophile is the C120. H371 acts as the Proton acceptor in catalysis. Disordered stretches follow at residues I452–S494, Q536–P707, L722–S1026, R1085–R1131, D1149–S1254, and G1275–K1294. Over residues P477–S489 the composition is skewed to low complexity. S483 carries the post-translational modification Phosphoserine. The segment covering Q536–Q564 has biased composition (polar residues). Residues S565–S576 are compositionally biased toward low complexity. Residues E586–V603 are compositionally biased toward polar residues. A phosphoserine mark is found at S754 and S856. 5 stretches are compositionally biased toward basic and acidic residues: residues A938–E974, C984–S1013, R1101–R1113, D1149–K1158, and D1165–K1191. S1181 carries the post-translational modification Phosphoserine. A compositionally biased stretch (basic residues) spans A1192–D1206. Basic and acidic residues predominate over residues K1207 to D1218. Residues S1219, S1222, and S1226 each carry the phosphoserine modification. The span at H1231 to R1245 shows a compositional bias: basic residues. Phosphoserine is present on S1247.

The protein belongs to the peptidase C19 family. In terms of tissue distribution, broadly expressed.

The catalysed reaction is Thiol-dependent hydrolysis of ester, thioester, amide, peptide and isopeptide bonds formed by the C-terminal Gly of ubiquitin (a 76-residue protein attached to proteins as an intracellular targeting signal).. In terms of biological role, deubiquitinating enzyme which may play an important role during spermatogenesis. The sequence is that of Ubiquitin carboxyl-terminal hydrolase 42 (USP42) from Homo sapiens (Human).